The chain runs to 374 residues: Autophagy-related protein 18e (374 aa).

WD repeat units follow at residues 28-66 (KSDL…KKSI), 72-117 (ESGF…CLSE), 202-242 (AHDS…LLQE), and 247-286 (VERA…LSFD).

It belongs to the WD repeat PROPPIN family. As to quaternary structure, component of the PI(3,5)P2 regulatory complex at least composed of ATG18, SAC/FIG4, FAB1 and VAC14.

It localises to the preautophagosomal structure membrane. The protein resides in the vacuole membrane. The PI(3,5)P2 regulatory complex regulates both the synthesis and turnover of phosphatidylinositol 3,5-bisphosphate (PtdIns(3,5)P2). Required for autophagy. This Arabidopsis thaliana (Mouse-ear cress) protein is Autophagy-related protein 18e (ATG18E).